We begin with the raw amino-acid sequence, 393 residues long: DNA primase large subunit PriL (393 aa).

[4Fe-4S] cluster contacts are provided by cysteine 230, cysteine 339, cysteine 350, and cysteine 356.

The protein belongs to the eukaryotic-type primase large subunit family. Heterodimer of a small subunit (PriS) and a large subunit (PriL). The cofactor is [4Fe-4S] cluster.

Regulatory subunit of DNA primase, an RNA polymerase that catalyzes the synthesis of short RNA molecules used as primers for DNA polymerase during DNA replication. Stabilizes and modulates the activity of the small subunit, increasing the rate of DNA synthesis, and conferring RNA synthesis capability. The DNA polymerase activity may enable DNA primase to also catalyze primer extension after primer synthesis. May also play a role in DNA repair. Displays gap-filling and strand-displacement activities. In Pyrococcus abyssi (strain GE5 / Orsay), this protein is DNA primase large subunit PriL.